Here is a 714-residue protein sequence, read N- to C-terminus: Fatty acid oxidation complex subunit alpha (714 aa).

The tract at residues 1 to 190 (MEMASAFTLN…KLGLVDDVVP (190 aa)) is enoyl-CoA hydratase. The 3-hydroxyacyl-CoA dehydrogenase stretch occupies residues 306 to 714 (APLNSVGILG…FWKTTATDLQ (409 aa)).

This sequence in the N-terminal section; belongs to the enoyl-CoA hydratase/isomerase family. In the central section; belongs to the 3-hydroxyacyl-CoA dehydrogenase family. In terms of assembly, heterotetramer of two alpha chains (FadJ) and two beta chains (FadI).

The protein localises to the cytoplasm. The enzyme catalyses a (3S)-3-hydroxyacyl-CoA = a (2E)-enoyl-CoA + H2O. It carries out the reaction a 4-saturated-(3S)-3-hydroxyacyl-CoA = a (3E)-enoyl-CoA + H2O. It catalyses the reaction a (3S)-3-hydroxyacyl-CoA + NAD(+) = a 3-oxoacyl-CoA + NADH + H(+). The catalysed reaction is (3S)-3-hydroxybutanoyl-CoA = (3R)-3-hydroxybutanoyl-CoA. It participates in lipid metabolism; fatty acid beta-oxidation. Catalyzes the formation of a hydroxyacyl-CoA by addition of water on enoyl-CoA. Also exhibits 3-hydroxyacyl-CoA epimerase and 3-hydroxyacyl-CoA dehydrogenase activities. The protein is Fatty acid oxidation complex subunit alpha of Escherichia coli (strain SMS-3-5 / SECEC).